A 279-amino-acid polypeptide reads, in one-letter code: Odontogenic ameloblast-associated protein (279 aa).

Positions 1 to 15 (MKIIILLGFLGATLS) are cleaved as a signal peptide. Low complexity predominate over residues 100 to 123 (AQGAQAGQVDPSQAQTPPQTQPGP). The tract at residues 100 to 125 (AQGAQAGQVDPSQAQTPPQTQPGPNH) is disordered. Thr-115 and Thr-119 each carry an O-linked (GalNAc...) threonine glycan. Positions 127–129 (MPY) are interaction with ARHGEF5. 6 O-linked (GalNAc...) threonine glycosylation sites follow: Thr-168, Thr-244, Thr-250, Thr-251, Thr-255, and Thr-273.

The protein belongs to the ODAM family. In terms of assembly, interacts (via C-terminus) with ARHGEF5. Post-translationally, O-glycosylated.

The protein resides in the secreted. It localises to the cytoplasm. Its subcellular location is the nucleus. Its function is as follows. Tooth-associated epithelia protein that probably plays a role in odontogenesis, the complex process that results in the initiation and generation of the tooth. May be incorporated in the enamel matrix at the end of mineralization process. Involved in the induction of RHOA activity via interaction with ARHGEF and expression of downstream factors such as ROCK. Plays a role in attachment of the junctional epithelium to the tooth surface. The polypeptide is Odontogenic ameloblast-associated protein (ODAM) (Macaca mulatta (Rhesus macaque)).